The chain runs to 368 residues: CST complex subunit STN1 (368 aa).

Positions 1-185 (MQPGSSRCEE…KIYDQPFRSS (185 aa)) are interaction with CTC1. Positions 57-155 (VDVLGTVVGV…EIHATAYYKV (99 aa)) form a DNA-binding region, OB. 2 winged helix-turn-helix (wHTH) regions span residues 191-295 (EALS…YVTR) and 296-368 (EDKD…YTAF).

The protein belongs to the STN1 family. Component of the CST complex, composed of TEN1/C17orf106, CTC1/C17orf68 and STN1; in the complex interacts directly with TEN1 and CTC1. Interacts with ACD/TPP1, POT1 and POLA1.

It is found in the nucleus. The protein resides in the chromosome. Its subcellular location is the telomere. Its function is as follows. Component of the CST complex proposed to act as a specialized replication factor promoting DNA replication under conditions of replication stress or natural replication barriers such as the telomere duplex. The CST complex binds single-stranded DNA with high affinity in a sequence-independent manner, while isolated subunits bind DNA with low affinity by themselves. Initially the CST complex has been proposed to protect telomeres from DNA degradation. However, the CST complex has been shown to be involved in several aspects of telomere replication. The CST complex inhibits telomerase and is involved in telomere length homeostasis; it is proposed to bind to newly telomerase-synthesized 3' overhangs and to terminate telomerase action implicating the association with the ACD:POT1 complex thus interfering with its telomerase stimulation activity. The CST complex is also proposed to be involved in fill-in synthesis of the telomeric C-strand probably implicating recruitment and activation of DNA polymerase alpha. The CST complex facilitates recovery from many forms of exogenous DNA damage; seems to be involved in the re-initiation of DNA replication at repaired forks and/or dormant origins. Required for efficicient replication of the duplex region of the telomere. Promotes efficient replication of lagging-strand telomeres. Promotes general replication start following replication-fork stalling implicating new origin firing. May be in involved in C-strand fill-in during late S/G2 phase independent of its role in telomere duplex replication. This is CST complex subunit STN1 from Macaca fascicularis (Crab-eating macaque).